A 338-amino-acid chain; its full sequence is tRNA N6-adenosine threonylcarbamoyltransferase (338 aa).

Fe cation-binding residues include H109 and H113. Residues A132–A136, D165, G178, and N277 each bind substrate. D302 contacts Fe cation.

This sequence belongs to the KAE1 / TsaD family. It depends on Fe(2+) as a cofactor.

The protein resides in the cytoplasm. The catalysed reaction is L-threonylcarbamoyladenylate + adenosine(37) in tRNA = N(6)-L-threonylcarbamoyladenosine(37) in tRNA + AMP + H(+). Its function is as follows. Required for the formation of a threonylcarbamoyl group on adenosine at position 37 (t(6)A37) in tRNAs that read codons beginning with adenine. Is involved in the transfer of the threonylcarbamoyl moiety of threonylcarbamoyl-AMP (TC-AMP) to the N6 group of A37, together with TsaE and TsaB. TsaD likely plays a direct catalytic role in this reaction. The chain is tRNA N6-adenosine threonylcarbamoyltransferase from Chlamydia trachomatis serovar A (strain ATCC VR-571B / DSM 19440 / HAR-13).